Reading from the N-terminus, the 236-residue chain is Endo-1,4-beta-xylanase 3 (236 aa).

A signal peptide spans 1–45 (MQILTWALAALAAIPAVTAAPVETVEASSMDELVERSPNVTLVAR). N-linked (GlcNAc...) asparagine glycosylation is found at asparagine 39 and asparagine 106. Positions 46 to 236 (GTPSSTGTHN…SSGSASMTVR (191 aa)) constitute a GH11 domain. Glutamate 131 functions as the Nucleophile in the catalytic mechanism. Glutamate 223 (proton donor) is an active-site residue.

The protein belongs to the glycosyl hydrolase 11 (cellulase G) family.

Its subcellular location is the secreted. It catalyses the reaction Endohydrolysis of (1-&gt;4)-beta-D-xylosidic linkages in xylans.. It functions in the pathway glycan degradation; xylan degradation. Its function is as follows. Endo-1,4-beta-xylanase involved in the hydrolysis of xylan, a major structural heterogeneous polysaccharide found in plant biomass representing the second most abundant polysaccharide in the biosphere, after cellulose. The polypeptide is Endo-1,4-beta-xylanase 3 (XYL3) (Pyricularia grisea (Crabgrass-specific blast fungus)).